The chain runs to 289 residues: 4-diphosphocytidyl-2-C-methyl-D-erythritol kinase (289 aa).

Lys-15 is an active-site residue. 100–110 (PVSAGLAGGSA) provides a ligand contact to ATP. The active site involves Asp-140.

The protein belongs to the GHMP kinase family. IspE subfamily.

The enzyme catalyses 4-CDP-2-C-methyl-D-erythritol + ATP = 4-CDP-2-C-methyl-D-erythritol 2-phosphate + ADP + H(+). Its pathway is isoprenoid biosynthesis; isopentenyl diphosphate biosynthesis via DXP pathway; isopentenyl diphosphate from 1-deoxy-D-xylulose 5-phosphate: step 3/6. Its function is as follows. Catalyzes the phosphorylation of the position 2 hydroxy group of 4-diphosphocytidyl-2C-methyl-D-erythritol. The protein is 4-diphosphocytidyl-2-C-methyl-D-erythritol kinase of Anaplasma marginale (strain Florida).